A 606-amino-acid chain; its full sequence is Phosphoenolpyruvate carboxykinase [GTP] (606 aa).

Substrate contacts are provided by residues arginine 79 and 218 to 220 (YGG). Mn(2+) contacts are provided by lysine 227 and histidine 247. A substrate-binding site is contributed by serine 269. 270–275 (ACGKTN) is a GTP binding site. The active site involves cysteine 271. Aspartate 294 contributes to the Mn(2+) binding site. 384 to 386 (NSR) contributes to the substrate binding site. Residues arginine 386, arginine 417, and 512–515 (FGEN) each bind GTP.

Belongs to the phosphoenolpyruvate carboxykinase [GTP] family. Monomer. Mn(2+) is required as a cofactor.

It localises to the cytoplasm. The enzyme catalyses oxaloacetate + GTP = phosphoenolpyruvate + GDP + CO2. It participates in carbohydrate biosynthesis; gluconeogenesis. In terms of biological role, catalyzes the conversion of oxaloacetate (OAA) to phosphoenolpyruvate (PEP), the rate-limiting step in the metabolic pathway that produces glucose from lactate and other precursors derived from the citric acid cycle. In Corynebacterium jeikeium (strain K411), this protein is Phosphoenolpyruvate carboxykinase [GTP].